We begin with the raw amino-acid sequence, 442 residues long: Elongation factor 1-gamma (442 aa).

The GST N-terminal domain occupies 2–87 (AAGTLYTYPE…YLSNDVLRGS (86 aa)). The 129-residue stretch at 88–216 (TPQASAQVLQ…VKLCEKMAQF (129 aa)) folds into the GST C-terminal domain. 2 stretches are compositionally biased toward basic and acidic residues: residues 227 to 242 (KKEA…KEGG) and 249 to 263 (QEKK…KAAP). Residues 227–273 (KKEAPIKKEKGGKEGGKQQPQQQEKKEKKKEEKKAAPAEEEMDECEA) form a disordered region. One can recognise an EF-1-gamma C-terminal domain in the interval 281 to 442 (AKDPFAHLPK…KPFNQGKIFK (162 aa)).

In terms of assembly, EF-1 is composed of four subunits: alpha, beta, delta, and gamma.

Probably plays a role in anchoring the complex to other cellular components. This Danio rerio (Zebrafish) protein is Elongation factor 1-gamma (eef1g).